We begin with the raw amino-acid sequence, 192 residues long: Ribosomal RNA small subunit methyltransferase G (192 aa).

S-adenosyl-L-methionine contacts are provided by residues glycine 63, leucine 68, 112-113 (IE), and arginine 125.

Belongs to the methyltransferase superfamily. RNA methyltransferase RsmG family.

It localises to the cytoplasm. It carries out the reaction guanosine(527) in 16S rRNA + S-adenosyl-L-methionine = N(7)-methylguanosine(527) in 16S rRNA + S-adenosyl-L-homocysteine. Specifically methylates the N7 position of guanine in position 527 of 16S rRNA. The chain is Ribosomal RNA small subunit methyltransferase G from Rickettsia rickettsii (strain Iowa).